Here is a 507-residue protein sequence, read N- to C-terminus: ATP synthase subunit alpha, chloroplastic (507 aa).

170-177 contacts ATP; sequence GDRQTGKT.

The protein belongs to the ATPase alpha/beta chains family. F-type ATPases have 2 components, CF(1) - the catalytic core - and CF(0) - the membrane proton channel. CF(1) has five subunits: alpha(3), beta(3), gamma(1), delta(1), epsilon(1). CF(0) has four main subunits: a, b, b' and c.

The protein resides in the plastid. It localises to the chloroplast thylakoid membrane. It carries out the reaction ATP + H2O + 4 H(+)(in) = ADP + phosphate + 5 H(+)(out). Produces ATP from ADP in the presence of a proton gradient across the membrane. The alpha chain is a regulatory subunit. The chain is ATP synthase subunit alpha, chloroplastic from Cucumis sativus (Cucumber).